We begin with the raw amino-acid sequence, 406 residues long: Tryptophan 2,3-dioxygenase (406 aa).

Residues 72-76 (FIITH) and Arg-144 contribute to the substrate site. His-328 contributes to the heme binding site. Thr-342 contributes to the substrate binding site.

The protein belongs to the tryptophan 2,3-dioxygenase family. As to quaternary structure, homotetramer. Dimer of dimers. Requires heme as cofactor.

The catalysed reaction is L-tryptophan + O2 = N-formyl-L-kynurenine. It participates in amino-acid degradation; L-tryptophan degradation via kynurenine pathway; L-kynurenine from L-tryptophan: step 1/2. Functionally, heme-dependent dioxygenase that catalyzes the oxidative cleavage of the L-tryptophan (L-Trp) pyrrole ring and converts L-tryptophan to N-formyl-L-kynurenine. Catalyzes the oxidative cleavage of the indole moiety. The chain is Tryptophan 2,3-dioxygenase from Homo sapiens (Human).